A 72-amino-acid polypeptide reads, in one-letter code: Small ribosomal subunit protein bS20 (72 aa).

It belongs to the bacterial ribosomal protein bS20 family.

Its function is as follows. Binds directly to 16S ribosomal RNA. This chain is Small ribosomal subunit protein bS20 (rpsT), found in Klebsiella pneumoniae.